The following is a 188-amino-acid chain: Elongation factor P (188 aa).

Residue Lys-34 is modified to N6-(3,6-diaminohexanoyl)-5-hydroxylysine.

This sequence belongs to the elongation factor P family. Post-translationally, may be beta-lysylated on the epsilon-amino group of Lys-34 by the combined action of EpmA and EpmB, and then hydroxylated on the C5 position of the same residue by EpmC (if this protein is present). Lysylation is critical for the stimulatory effect of EF-P on peptide-bond formation. The lysylation moiety may extend toward the peptidyltransferase center and stabilize the terminal 3-CCA end of the tRNA. Hydroxylation of the C5 position on Lys-34 may allow additional potential stabilizing hydrogen-bond interactions with the P-tRNA.

It localises to the cytoplasm. The protein operates within protein biosynthesis; polypeptide chain elongation. In terms of biological role, involved in peptide bond synthesis. Alleviates ribosome stalling that occurs when 3 or more consecutive Pro residues or the sequence PPG is present in a protein, possibly by augmenting the peptidyl transferase activity of the ribosome. Modification of Lys-34 is required for alleviation. In Histophilus somni (strain 129Pt) (Haemophilus somnus), this protein is Elongation factor P.